Here is a 511-residue protein sequence, read N- to C-terminus: Peroxisomal N(1)-acetyl-spermine/spermidine oxidase (511 aa).

The residue at position 1 (Met-1) is an N-acetylmethionine. Residues Ala-24, Glu-45, Arg-53, and 69–70 contribute to the FAD site; that span reads HW. 2 residues coordinate substrate: His-72 and Val-194. Residue Val-247 participates in FAD binding. Asn-320 contributes to the substrate binding site. FAD contacts are provided by residues Glu-472 and 481–482; that span reads TT. A Microbody targeting signal motif is present at residues 509 to 511; that stretch reads PRL.

It belongs to the flavin monoamine oxidase family. In terms of assembly, monomer. FAD serves as cofactor. Widely expressed. Not detected in spleen. Expressed at lower level in neoplastic tissues.

It localises to the peroxisome. The protein resides in the cytoplasm. It carries out the reaction N(1)-acetylspermine + O2 + H2O = 3-acetamidopropanal + spermidine + H2O2. It catalyses the reaction N(1)-acetylspermidine + O2 + H2O = 3-acetamidopropanal + putrescine + H2O2. The enzyme catalyses N(1),N(12)-diacetylspermine + O2 + H2O = 3-acetamidopropanal + N(1)-acetylspermidine + H2O2. The protein operates within amine and polyamine metabolism; spermine metabolism. Its function is as follows. Flavoenzyme which catalyzes the oxidation of N(1)-acetylspermine to spermidine and is thus involved in the polyamine back-conversion. Can also oxidize N(1)-acetylspermidine to putrescine. Substrate specificity: N(1)-acetylspermine = N(1)-acetylspermidine &gt; N(1),N(12)-diacylspermine &gt;&gt; spermine. Does not oxidize spermidine. Plays an important role in the regulation of polyamine intracellular concentration and has the potential to act as a determinant of cellular sensitivity to the antitumor polyamine analogs. In Homo sapiens (Human), this protein is Peroxisomal N(1)-acetyl-spermine/spermidine oxidase (PAOX).